Consider the following 1482-residue polypeptide: Chromosome partition protein MukB (1482 aa).

Residue 34–41 (GGNGAGKS) participates in ATP binding. Residues 333–665 (ASDHLNLVQT…LEKQIERLSQ (333 aa)) are a coiled coil. Residues 666–783 (PSGAEDSRMI…ELPLFGRAAR (118 aa)) form a flexible hinge region. Coiled-coil stretches lie at residues 784-1116 (ENRL…AKAG) and 1209-1260 (VDAI…MLNQ).

The protein belongs to the SMC family. MukB subfamily. In terms of assembly, homodimerization via its hinge domain. Binds to DNA via its C-terminal region. Interacts, and probably forms a ternary complex, with MukE and MukF via its C-terminal region. The complex formation is stimulated by calcium or magnesium. Interacts with tubulin-related protein FtsZ.

It is found in the cytoplasm. Its subcellular location is the nucleoid. Functionally, plays a central role in chromosome condensation, segregation and cell cycle progression. Functions as a homodimer, which is essential for chromosome partition. Involved in negative DNA supercoiling in vivo, and by this means organize and compact chromosomes. May achieve or facilitate chromosome segregation by condensation DNA from both sides of a centrally located replisome during cell division. This chain is Chromosome partition protein MukB, found in Photorhabdus laumondii subsp. laumondii (strain DSM 15139 / CIP 105565 / TT01) (Photorhabdus luminescens subsp. laumondii).